Reading from the N-terminus, the 350-residue chain is 26S proteasome non-ATPase regulatory subunit 8 (350 aa).

Residues 1-24 (MFIKGRAPRAPPRERRRATRGGLR) form a disordered region. Phosphoserine is present on serine 106. The 170-residue stretch at 162-331 (PSFERYMAQL…QQKPEDTTIP (170 aa)) folds into the PCI domain. Residue lysine 297 forms a Glycyl lysine isopeptide (Lys-Gly) (interchain with G-Cter in SUMO2) linkage.

The protein belongs to the proteasome subunit S14 family. As to quaternary structure, component of the 19S proteasome regulatory particle complex. The 26S proteasome consists of a 20S core particle (CP) and two 19S regulatory subunits (RP). The regulatory particle is made of a lid composed of 9 subunits including PSMD8, a base containing 6 ATPases and few additional components. Interacts with DDI2. Interacts with TASOR.

In terms of biological role, component of the 26S proteasome, a multiprotein complex involved in the ATP-dependent degradation of ubiquitinated proteins. This complex plays a key role in the maintenance of protein homeostasis by removing misfolded or damaged proteins, which could impair cellular functions, and by removing proteins whose functions are no longer required. Therefore, the proteasome participates in numerous cellular processes, including cell cycle progression, apoptosis, or DNA damage repair. In Homo sapiens (Human), this protein is 26S proteasome non-ATPase regulatory subunit 8 (PSMD8).